The following is a 339-amino-acid chain: EEIG family member 2 (339 aa).

The C2 NT-type domain maps to Met1 to Leu111. A Phosphoserine modification is found at Ser197. Positions Thr226 to Pro262 are disordered. Over residues Thr230 to Thr248 the composition is skewed to low complexity. Residues Ala249–Ala259 are compositionally biased toward basic and acidic residues. Phosphoserine occurs at positions 255, 267, 299, 300, and 329.

The protein belongs to the EEIG family. As to expression, expressed in bone marrow-derived macrophages.

This Mus musculus (Mouse) protein is EEIG family member 2 (Eeig2).